Consider the following 710-residue polypeptide: Polyribonucleotide nucleotidyltransferase (710 aa).

Aspartate 501 and aspartate 507 together coordinate Mg(2+). One can recognise a KH domain in the interval 568–628 (PKVQMFQIKP…ETVKQAILFI (61 aa)). An S1 motif domain is found at 638 to 710 (NSIYHAHISR…RIDFVLISKK (73 aa)).

It belongs to the polyribonucleotide nucleotidyltransferase family. It depends on Mg(2+) as a cofactor.

The protein resides in the cytoplasm. It carries out the reaction RNA(n+1) + phosphate = RNA(n) + a ribonucleoside 5'-diphosphate. Involved in mRNA degradation. Catalyzes the phosphorolysis of single-stranded polyribonucleotides processively in the 3'- to 5'-direction. This chain is Polyribonucleotide nucleotidyltransferase, found in Phytoplasma australiense.